Reading from the N-terminus, the 760-residue chain is Serine/threonine-protein kinase Haspin homolog ALK1 (760 aa).

A phosphoserine mark is found at serine 76 and serine 79. Disordered stretches follow at residues 76-100 (SDAS…KKRW), 123-153 (SSFT…SSLD), 187-264 (DDIS…STVS), and 362-408 (KRNS…CSYS). The span at 78–95 (ASLNVTTGNNTSRKTTSN) shows a compositional bias: polar residues. The short motif at 200–202 (KEN) is the KEN box element. Polar residues predominate over residues 209–220 (KKNSSIASTSSE). Residues 224 to 232 (RTPLKPLVN) carry the D box motif. The segment covering 237–250 (PTSQPQQQQPLYNA) has biased composition (polar residues). The span at 251–264 (SLSSRRSSISSTVS) shows a compositional bias: low complexity. Over residues 362–386 (KRNSQSSLKHKSSHASLQKFKRNKG) the composition is skewed to basic residues. The segment covering 398 to 408 (NSSNDDSCSYS) has biased composition (low complexity). The Protein kinase domain maps to 468–760 (NCDIKRILNP…NTGDLLKLYK (293 aa)). Residues 474-482 (ILNPAKGDV) and lysine 510 each bind ATP.

It belongs to the protein kinase superfamily. Ser/Thr protein kinase family. Haspin subfamily. In terms of processing, periodically phosphorylated during the cell cycle with a phosphorylation peak during mitosis and hyperphosphorylated after DNA damage.

It carries out the reaction L-seryl-[protein] + ATP = O-phospho-L-seryl-[protein] + ADP + H(+). The catalysed reaction is L-threonyl-[protein] + ATP = O-phospho-L-threonyl-[protein] + ADP + H(+). Its function is as follows. Serine/threonine haspin-like protein kinase involved in cell cycle regulation. In Saccharomyces cerevisiae (strain ATCC 204508 / S288c) (Baker's yeast), this protein is Serine/threonine-protein kinase Haspin homolog ALK1 (ALK1).